Here is a 494-residue protein sequence, read N- to C-terminus: 4-trimethylaminobutyraldehyde dehydrogenase (494 aa).

S2 is subject to N-acetylserine. The residue at position 30 (K30) is an N6-acetyllysine; alternate. K30 is modified (N6-succinyllysine; alternate). At K59 the chain carries N6-succinyllysine. Residues K180 and G232–T236 contribute to the NAD(+) site. E254 (proton acceptor) is an active-site residue. The active-site Nucleophile is C288. K298 is subject to N6-acetyllysine. K303 bears the N6-acetyllysine; alternate mark. K303 is subject to N6-succinyllysine; alternate. Residue K344 is modified to N6-acetyllysine. Residue E391 participates in NAD(+) binding.

It belongs to the aldehyde dehydrogenase family. As to quaternary structure, homotetramer.

The protein localises to the cytoplasm. The protein resides in the cytosol. It catalyses the reaction 4-(trimethylamino)butanal + NAD(+) + H2O = 4-(trimethylamino)butanoate + NADH + 2 H(+). The catalysed reaction is an aldehyde + NAD(+) + H2O = a carboxylate + NADH + 2 H(+). It carries out the reaction 4-aminobutanal + NAD(+) + H2O = 4-aminobutanoate + NADH + 2 H(+). The enzyme catalyses formaldehyde + NAD(+) + H2O = formate + NADH + 2 H(+). It catalyses the reaction acetaldehyde + NAD(+) + H2O = acetate + NADH + 2 H(+). The catalysed reaction is imidazole-4-acetaldehyde + NAD(+) + H2O = imidazole-4-acetate + NADH + 2 H(+). It carries out the reaction acrolein + NAD(+) + H2O = acrylate + NADH + 2 H(+). The enzyme catalyses (5-hydroxyindol-3-yl)acetaldehyde + NAD(+) + H2O = (5-hydroxyindol-3-yl)acetate + NADH + 2 H(+). It catalyses the reaction 3,4-dihydroxyphenylacetaldehyde + NAD(+) + H2O = 3,4-dihydroxyphenylacetate + NADH + 2 H(+). The catalysed reaction is spermine monoaldehyde + NAD(+) + H2O = N-(2-carboxyethyl)spermidine + NADH + 2 H(+). It carries out the reaction propanal + NAD(+) + H2O = propanoate + NADH + 2 H(+). The enzyme catalyses butanal + NAD(+) + H2O = butanoate + NADH + 2 H(+). It catalyses the reaction pentanal + NAD(+) + H2O = pentanoate + NADH + 2 H(+). The catalysed reaction is hexanal + NAD(+) + H2O = hexanoate + NADH + 2 H(+). The protein operates within amine and polyamine biosynthesis; carnitine biosynthesis. Converts gamma-trimethylaminobutyraldehyde into gamma-butyrobetaine with high efficiency (in vitro). Can catalyze the irreversible oxidation of a broad range of aldehydes to the corresponding acids in an NAD-dependent reaction, but with low efficiency. Catalyzes the oxidation of aldehydes arising from biogenic amines and polyamines. The protein is 4-trimethylaminobutyraldehyde dehydrogenase (ALDH9A1) of Pongo abelii (Sumatran orangutan).